The chain runs to 254 residues: 5'/3'-nucleotidase SurE (254 aa).

4 residues coordinate a divalent metal cation: Asp-9, Asp-10, Ser-40, and Asn-93.

Belongs to the SurE nucleotidase family. A divalent metal cation serves as cofactor.

Its subcellular location is the cytoplasm. The enzyme catalyses a ribonucleoside 5'-phosphate + H2O = a ribonucleoside + phosphate. It carries out the reaction a ribonucleoside 3'-phosphate + H2O = a ribonucleoside + phosphate. It catalyses the reaction [phosphate](n) + H2O = [phosphate](n-1) + phosphate + H(+). Nucleotidase with a broad substrate specificity as it can dephosphorylate various ribo- and deoxyribonucleoside 5'-monophosphates and ribonucleoside 3'-monophosphates with highest affinity to 3'-AMP. Also hydrolyzes polyphosphate (exopolyphosphatase activity) with the preference for short-chain-length substrates (P20-25). Might be involved in the regulation of dNTP and NTP pools, and in the turnover of 3'-mononucleotides produced by numerous intracellular RNases (T1, T2, and F) during the degradation of various RNAs. This Yersinia pestis bv. Antiqua (strain Antiqua) protein is 5'/3'-nucleotidase SurE.